Reading from the N-terminus, the 440-residue chain is Thymidine phosphorylase (440 aa).

Belongs to the thymidine/pyrimidine-nucleoside phosphorylase family. In terms of assembly, homodimer.

It carries out the reaction thymidine + phosphate = 2-deoxy-alpha-D-ribose 1-phosphate + thymine. Its pathway is pyrimidine metabolism; dTMP biosynthesis via salvage pathway; dTMP from thymine: step 1/2. In terms of biological role, the enzymes which catalyze the reversible phosphorolysis of pyrimidine nucleosides are involved in the degradation of these compounds and in their utilization as carbon and energy sources, or in the rescue of pyrimidine bases for nucleotide synthesis. This chain is Thymidine phosphorylase, found in Salmonella heidelberg (strain SL476).